A 357-amino-acid polypeptide reads, in one-letter code: Dynein axonemal assembly factor 10 (357 aa).

WD repeat units follow at residues 63–105 (EKAK…VPVY), 115–154 (NTIDGVGGLGIGEGAPEIVTGSRDGTVKVWDPRQKDDPVA), 162–205 (ENKR…LRWE), 207–249 (NIKN…PTKG), 257–297 (AHKS…QRSK), and 319–357 (LSTQPVSSLDWSPDKRGLCICSSFDQMVRVLIVTKLHKI).

In terms of assembly, component of the PAQosome complex which is responsible for the biogenesis of several protein complexes and which consists of R2TP complex members RUVBL1, RUVBL2, RPAP3 and PIH1D1, URI complex members PFDN2, PFDN6, PDRG1, UXT and URI1 as well as ASDURF, POLR2E and DNAAF10/WDR92. Interacts with PIH1D1; the interaction associates DNAAF10 with the R2TP complex. Interacts with several dynein axonemal assembly factors.

The protein resides in the dynein axonemal particle. In terms of biological role, key assembly factor specifically required for the stability of axonemal dynein heavy chains in cytoplasm. The sequence is that of Dynein axonemal assembly factor 10 (DNAAF10) from Bos taurus (Bovine).